The chain runs to 95 residues: UPF0512 protein H (95 aa).

It belongs to the UPF0512 family.

The polypeptide is UPF0512 protein H (Dictyostelium discoideum (Social amoeba)).